The sequence spans 648 residues: MTALLELCNVSRSYPSGEEQVAVLKDISLQIHAGEMVAIVGVSGSGKSTLMNILGCLDKPTSGTYRVAGRDVSTLDPDALAQLRREHFGFIFQRYHLLSHLTAAQNVEIPAVYAGIERKKRQARARELLLRLGLSDRVDYPPSQLSGGQQQRVSIARALMNGGQVILADEPTGALDSHSGEEVMAILRQLRDRGHTVIIVTHDPLIAAQAERIIEIHDGKIVHNPPAQEKKREQGVDAAVVNTAPGWRQFASSFREALSMAWLAMAANKMRTLLTMLGIIIGIASVVSIVVVGDAAKQMVLADIRAMGTNTIDIHPGKDFGDDNPQYRQALKYDDLVAIQKQPWVNSATPSVSKSLRLRYGNIDIAVNANGVSGDYFNVYGMSFREGNTFNAVQQQDRAQVVVLDANTRRQLFPNKANVVGEVVLAGNMPVIVIGVAEEKPSMYGNSNLLQVWLPYSTMSDRIMGQSWLNSITVRVKDGVDSDQAEQQLTRLLTLRHGKKDFFTWNMDSVLKTAEKTTYTLQLFLTLVAVISLVVGGIGVMNIMLVSVTERTREIGIRMAVGARASDVLQQFLIEAVLVCLVGGALGISLSMFIAFMLQLFLPGWEIGFSLTALASAFLCSTFTGILFGWLPARNAARLDPVDALARE.

An ABC transporter domain is found at 5–243 (LELCNVSRSY…QGVDAAVVNT (239 aa)). 41–48 (GVSGSGKS) lines the ATP pocket. Transmembrane regions (helical) follow at residues 273-293 (LLTM…VVVG), 417-437 (ANVV…IGVA), 523-543 (LFLT…VMNI), 577-597 (VLVC…IAFM), and 611-631 (LTAL…FGWL).

It belongs to the ABC transporter superfamily. Macrolide exporter (TC 3.A.1.122) family. Homodimer. Part of the tripartite efflux system MacAB-TolC, which is composed of an inner membrane transporter, MacB, a periplasmic membrane fusion protein, MacA, and an outer membrane component, TolC. The complex forms a large protein conduit and can translocate molecules across both the inner and outer membranes. Interacts with MacA.

Its subcellular location is the cell inner membrane. Functionally, part of the tripartite efflux system MacAB-TolC. MacB is a non-canonical ABC transporter that contains transmembrane domains (TMD), which form a pore in the inner membrane, and an ATP-binding domain (NBD), which is responsible for energy generation. Confers resistance against macrolides. This chain is Macrolide export ATP-binding/permease protein MacB, found in Salmonella typhimurium (strain LT2 / SGSC1412 / ATCC 700720).